Here is a 612-residue protein sequence, read N- to C-terminus: Breast cancer type 1 susceptibility protein homolog (612 aa).

Residues 21–61 (CGICCSTYKDPILSTCFHIFCRSCINACFERKRKVQCPICR) form an RING-type zinc finger. The segment at 140–173 (RRKRPSRPQPPSAFAEEPAEPVEPPEPATKQPVE) is disordered. 2 consecutive BRCT domains span residues 415 to 477 (RFAE…DYTI) and 505 to 603 (EHGK…PYKA).

Heterodimer (via RING-type zinc finger) with brd-1 to form the core CeBCD complex. Brc-1-brd-1 heterodimer-containing CeBCD complexes bound to chromatin are activated as an E3-ubiquitin ligase in response to DNA damage. The heterodimer interacts with the recombinase rad-51 following ionizing irradiation; the interaction is direct. The heterodimer interacts the E2-ubiquitin-conjugating enzyme let-70 following ionizing irradiation. The heterodimer interacts with the pro-crossover proteins msh-5 and syp-3. Post-translationally, phosphorylation of CeBCD complexes is required for E3 ubiquitin-protein ligase activity.

It localises to the nucleus. The protein localises to the chromosome. It is found in the cytoplasm. It carries out the reaction S-ubiquitinyl-[E2 ubiquitin-conjugating enzyme]-L-cysteine + [acceptor protein]-L-lysine = [E2 ubiquitin-conjugating enzyme]-L-cysteine + N(6)-ubiquitinyl-[acceptor protein]-L-lysine.. The protein operates within protein modification; protein ubiquitination. Its activity is regulated as follows. E3 ubiquitin-protein ligase activity of CeBCD complexes occurs at DNA damage sites. Following DNA damage, E3 ubiquitin-protein ligase activity is reduced by caffeine treatment (inhibitor of ATM and ATK kinase activity). Functionally, E3 ubiquitin-protein ligase that specifically mediates the formation of polyubiquitin chains and plays a central role in DNA repair. Plays a role in triggering cellular responses at damage sites in response to DNA damage that may be induced by UV and ionizing radiation for example. Functions in double-strand break repair, and is required for homologous recombination between sister chromatids in meiotic and mitotic cells. In particular, protects against chromosome non-disjunction and nuclear fragmentation during meiotic double-strand break repair to ensure sister chromatid recombination and aid chromosome stability. Required for normal cell cycle progression. Along with brap-2 modulates the expression of cell cycle arrest protein cki-1 in response to increased levels of reactive oxygen species. Constituent of the CeBCD complex that possesses E3 ubiquitin-protein ligase activity. When bound to chromatin, the brc-1-brd-1 heterodimer within the CeBCD complex is inactive during normal conditions, but in response to DNA damage, the brc-1-brd-1 heterodimer associates with other proteins such as the recombinase rad-51 or the E2-ubiquitin-conjugating enzyme let-70, which activate the CeBCD complex as an E3-ubiquitin ligase. Moreover, association between the brc-1-brd-1 heterodimer and rad-51 and let-70, probably requires DNA checkpoint proteins such as atl-1 and mre-11 in order to induce ubiquitination at DNA damage sites. To this end, the brc-1-brd-1 heterodimer coordinates a diverse range of cellular pathways such as DNA damage repair, ubiquitination and transcriptional regulation to maintain genomic stability. This Caenorhabditis elegans protein is Breast cancer type 1 susceptibility protein homolog.